A 290-amino-acid polypeptide reads, in one-letter code: Shikimate dehydrogenase (NADP(+)) (290 aa).

Shikimate contacts are provided by residues 21 to 23 (SLS) and Thr-68. Lys-72 acts as the Proton acceptor in catalysis. Glu-84 contacts NADP(+). Residues Asn-93 and Asp-108 each coordinate shikimate. Residues 132 to 136 (GYGGA) and Leu-230 contribute to the NADP(+) site. Tyr-232 is a binding site for shikimate. Position 253 (Gly-253) interacts with NADP(+).

This sequence belongs to the shikimate dehydrogenase family. Homodimer.

The enzyme catalyses shikimate + NADP(+) = 3-dehydroshikimate + NADPH + H(+). Its pathway is metabolic intermediate biosynthesis; chorismate biosynthesis; chorismate from D-erythrose 4-phosphate and phosphoenolpyruvate: step 4/7. Functionally, involved in the biosynthesis of the chorismate, which leads to the biosynthesis of aromatic amino acids. Catalyzes the reversible NADPH linked reduction of 3-dehydroshikimate (DHSA) to yield shikimate (SA). The sequence is that of Shikimate dehydrogenase (NADP(+)) from Synechocystis sp. (strain ATCC 27184 / PCC 6803 / Kazusa).